Reading from the N-terminus, the 648-residue chain is Macrolide export ATP-binding/permease protein MacB (648 aa).

At 1–272 (MTPLLELKDI…RALAANKMRT (272 aa)) the chain is on the cytoplasmic side. An ABC transporter domain is found at 5 to 243 (LELKDIRRSY…TGGTEPVVNT (239 aa)). Position 41–48 (41–48 (GASGSGKS)) interacts with ATP. The chain crosses the membrane as a helical span at residues 273-293 (LLTMLGIIIGIASVVSIVVVG). Over 294–522 (DAAKQMVLAD…TVEKTTRTLQ (229 aa)) the chain is Periplasmic. The helical transmembrane segment at 523 to 543 (LFLTLVAVISLVVGGIGVMNI) threads the bilayer. Topologically, residues 544 to 575 (MLVSVTERTREIGIRMAVGARASDVLQQFLIE) are cytoplasmic. A helical transmembrane segment spans residues 576 to 596 (AVLVCLVGGALGITLSLLIAF). The Periplasmic segment spans residues 597-610 (TLQLFLPGWEIGFS). A helical transmembrane segment spans residues 611-631 (PLALLLAFLCSTVTGILFGWL). The Cytoplasmic segment spans residues 632–648 (PARNAARLDPVDALARE).

It belongs to the ABC transporter superfamily. Macrolide exporter (TC 3.A.1.122) family. Homodimer. Part of the tripartite efflux system MacAB-TolC, which is composed of an inner membrane transporter, MacB, a periplasmic membrane fusion protein, MacA, and an outer membrane component, TolC. The complex forms a large protein conduit and can translocate molecules across both the inner and outer membranes. Interacts with MacA.

It localises to the cell inner membrane. Its activity is regulated as follows. ATPase activity is stimulated by interaction with MacA and inhibited by vanadate. Part of the tripartite efflux system MacAB-TolC. MacB is a non-canonical ABC transporter that contains transmembrane domains (TMD), which form a pore in the inner membrane, and an ATP-binding domain (NBD), which is responsible for energy generation. When overexpressed, the system confers resistance against macrolides composed of 14- and 15-membered lactones but no or weak resistance against 16-membered ones. In addition, the system could also transport R-LPS or a similar glycolipid. The polypeptide is Macrolide export ATP-binding/permease protein MacB (Escherichia coli (strain K12)).